The sequence spans 310 residues: Choline trimethylamine-lyase activating enzyme (310 aa).

Positions 17-304 constitute a Radical SAM core domain; that stretch reads YDGPGVRTLV…EACIRKYDFP (288 aa). [4Fe-4S] cluster-binding residues include Cys-31, Cys-35, Cys-38, Cys-57, Cys-60, Cys-63, and Cys-99. S-adenosyl-L-methionine is bound at residue 37-39; the sequence is WCS. 4Fe-4S ferredoxin-type domains lie at 48–77 and 79–109; these read YQVL…ISAS and LRHG…VVGE. Residues Gly-139, 188–190, and His-264 each bind S-adenosyl-L-methionine; that span reads DVK.

This sequence belongs to the organic radical-activating enzymes family. As to quaternary structure, monomer. Requires [4Fe-4S] cluster as cofactor.

It carries out the reaction glycyl-[protein] + reduced [flavodoxin] + S-adenosyl-L-methionine = glycin-2-yl radical-[protein] + semiquinone [flavodoxin] + 5'-deoxyadenosine + L-methionine + H(+). It functions in the pathway amine and polyamine metabolism; choline degradation. In terms of biological role, catalyzes activation of the choline trimethylamine-lyase CutC under anaerobic conditions by generation of an organic free radical on a glycine residue, via a homolytic cleavage of S-adenosyl-L-methionine (SAM). Is involved in the anaerobic choline utilization pathway that allows D.alaskensis to grow on choline as a source of carbon and energy. The sequence is that of Choline trimethylamine-lyase activating enzyme from Oleidesulfovibrio alaskensis (strain ATCC BAA-1058 / DSM 17464 / G20) (Desulfovibrio alaskensis).